The sequence spans 712 residues: Phosphomethylpyrimidine synthase (712 aa).

Residues 14 to 49 form a disordered region; sequence AIDITAPESTIPNKSKVPNKSAESSQSTVPKAPSRR. The span at 20–42 shows a compositional bias: polar residues; sequence PESTIPNKSKVPNKSAESSQSTV. Residues N283, M312, Y341, H377, 397 to 399, 438 to 441, and E477 each bind substrate; these read SRG and DGMR. H481 contributes to the Zn(2+) binding site. A substrate-binding site is contributed by Y504. H545 lines the Zn(2+) pocket. Positions 625, 628, and 633 each coordinate [4Fe-4S] cluster.

It belongs to the ThiC family. Homodimer. [4Fe-4S] cluster is required as a cofactor.

The catalysed reaction is 5-amino-1-(5-phospho-beta-D-ribosyl)imidazole + S-adenosyl-L-methionine = 4-amino-2-methyl-5-(phosphooxymethyl)pyrimidine + CO + 5'-deoxyadenosine + formate + L-methionine + 3 H(+). The protein operates within cofactor biosynthesis; thiamine diphosphate biosynthesis. Catalyzes the synthesis of the hydroxymethylpyrimidine phosphate (HMP-P) moiety of thiamine from aminoimidazole ribotide (AIR) in a radical S-adenosyl-L-methionine (SAM)-dependent reaction. In Shewanella putrefaciens (strain CN-32 / ATCC BAA-453), this protein is Phosphomethylpyrimidine synthase.